Reading from the N-terminus, the 186-residue chain is MLLSRTAVAVARRATAAPALRRSIATTVVRCNAETKPVPHIKRLSEIKTKDDLFGPGAAPGTVPTDLEQATGLERLEILGKMEGVDVFDMKPLDASRRGTMENPISVRSAGDEQYAGCTGFPADSHNVIWLTMTRERPVERCPECGNVYKMDYVGPQDDHAHDHGHDHHGFEEPKTFADYVKPEYW.

The N-terminal 31 residues, 1–31 (MLLSRTAVAVARRATAAPALRRSIATTVVRC), are a transit peptide targeting the mitochondrion. 4 residues coordinate Zn(2+): cysteine 118, histidine 126, cysteine 142, and cysteine 145.

It belongs to the cytochrome c oxidase subunit 5B family. In terms of assembly, component of the cytochrome c oxidase (complex IV, CIV), a multisubunit enzyme composed of 11 subunits. The complex is composed of a catalytic core of 3 subunits Cox1, Cox2 and Cox3, encoded in the mitochondrial DNA, and 8 supernumerary subunits Cox4, Cox5a/Cox5, Cox6, Cox7, Cox8, Cox7a/Cox9, Cox6b/Cox12 and Cox6a/Cox13, which are encoded in the nuclear genome. The complex exists as a monomer or a dimer and forms respiratory supercomplexes (SCs) in the inner mitochondrial membrane with NADH-ubiquinone oxidoreductase (complex I, CI) and ubiquinol-cytochrome c oxidoreductase (cytochrome b-c1 complex, complex III, CIII), resulting in various different assemblies (supercomplexes I(1)IV(1), I(1)III(3)IV(2), III(2)IV(1) and III(2)IV(2) as well as larger supercomplexes of compositions like I(1)III(2)IV(5-6)).

It localises to the mitochondrion inner membrane. The protein operates within energy metabolism; oxidative phosphorylation. Functionally, component of the cytochrome c oxidase, the last enzyme in the mitochondrial electron transport chain which drives oxidative phosphorylation. The respiratory chain contains 3 multisubunit complexes succinate dehydrogenase (complex II, CII), ubiquinol-cytochrome c oxidoreductase (cytochrome b-c1 complex, complex III, CIII) and cytochrome c oxidase (complex IV, CIV), that cooperate to transfer electrons derived from NADH and succinate to molecular oxygen, creating an electrochemical gradient over the inner membrane that drives transmembrane transport and the ATP synthase. Cytochrome c oxidase is the component of the respiratory chain that catalyzes the reduction of oxygen to water. Electrons originating from reduced cytochrome c in the intermembrane space (IMS) are transferred via the dinuclear copper A center (CU(A)) of Cox2 and heme A of Cox1 to the active site in Cox1, a binuclear center (BNC) formed by heme A3 and copper B (CU(B)). The BNC reduces molecular oxygen to 2 water molecules using 4 electrons from cytochrome c in the IMS and 4 protons from the mitochondrial matrix. The chain is Cytochrome c oxidase subunit 4, mitochondrial (cox-4) from Neurospora crassa (strain ATCC 24698 / 74-OR23-1A / CBS 708.71 / DSM 1257 / FGSC 987).